We begin with the raw amino-acid sequence, 389 residues long: UDP-D-apiose/UDP-D-xylose synthase 2 (389 aa).

NAD(+) contacts are provided by Phe-28, Ile-29, Asp-49, Asn-76, Ile-77, and Leu-96. Residues Tyr-105, Thr-139, Glu-141, Arg-182, and Tyr-185 each contribute to the UDP-alpha-D-glucuronate site. 2 residues coordinate NAD(+): Tyr-185 and Lys-189. The active-site Proton acceptor is the Tyr-185. UDP-alpha-D-glucuronate is bound at residue Asn-214. Trp-215 and Arg-235 together coordinate NAD(+). UDP-alpha-D-glucuronate is bound by residues Lys-251, Val-253, Arg-260, Tyr-331, Tyr-335, Asp-337, and Arg-341.

It belongs to the NAD(P)-dependent epimerase/dehydratase family. In terms of assembly, homodimer and heterodimer with AXS1. It depends on NAD(+) as a cofactor. As to expression, widely expressed with stronger expression in dark-grown seedlings, leaves and stems, and lower levels in flowers, siliques, pistils, pollen and roots.

The protein localises to the cytoplasm. The enzyme catalyses UDP-alpha-D-glucuronate + H(+) = UDP-alpha-D-xylose + CO2. The catalysed reaction is UDP-alpha-D-glucuronate + H(+) = UDP-alpha-D-apiose + CO2. In terms of biological role, together with AXS1, catalyzes the conversion of UDP-D-glucuronate into a mixture of UDP-D-apiose (UDP-Api) as the main product and UDP-D-xylose to a lesser extent, via a cycle of oxidation and reduction. D-Apiose (3-C-hydroxymethyl-d-erythrose) is the only plant cell wall monosaccharide with a branched carbon skeleton and is found in rhamnogalacturonan II (RG-II), apiogalacturonan, and several apioglycosides. This is UDP-D-apiose/UDP-D-xylose synthase 2 from Arabidopsis thaliana (Mouse-ear cress).